Consider the following 145-residue polypeptide: UPF0102 protein BAV3162 (145 aa).

The protein belongs to the UPF0102 family.

The protein is UPF0102 protein BAV3162 of Bordetella avium (strain 197N).